The following is a 206-amino-acid chain: Protein SUE1, mitochondrial (206 aa).

The transit peptide at 1 to 24 (MILLKRTKIRGVSVSFVSLQRRTH) directs the protein to the mitochondrion.

It localises to the mitochondrion envelope. Required for degradation of unstable forms of cytochrome c. The chain is Protein SUE1, mitochondrial from Saccharomyces cerevisiae (strain ATCC 204508 / S288c) (Baker's yeast).